The following is a 315-amino-acid chain: Gamma-hemolysin component C (315 aa).

The N-terminal stretch at methionine 1–alanine 29 is a signal peptide.

This sequence belongs to the aerolysin family. In terms of assembly, toxicity requires sequential binding and synergistic association of a class S and a class F component which form heterooligomeric complexes. HlgC (class S) associates with HlgB (class F) thus forming an CB toxin.

In terms of biological role, toxin that seems to act by forming pores in the membrane of the cell. Has a hemolytic and a leucotoxic activity. This Staphylococcus aureus (strain Mu50 / ATCC 700699) protein is Gamma-hemolysin component C (hlgC).